The following is a 662-amino-acid chain: Glycogen debranching enzyme (662 aa).

The active-site Nucleophile is D338. E373 serves as the catalytic Proton donor.

The protein belongs to the glycosyl hydrolase 13 family.

The catalysed reaction is Hydrolysis of (1-&gt;6)-alpha-D-glucosidic linkages to branches with degrees of polymerization of three or four glucose residues in limit dextrin.. It participates in glycan degradation; glycogen degradation. Functionally, removes maltotriose and maltotetraose chains that are attached by 1,6-alpha-linkage to the limit dextrin main chain, generating a debranched limit dextrin. This chain is Glycogen debranching enzyme, found in Yersinia pestis bv. Antiqua (strain Angola).